The primary structure comprises 110 residues: Large ribosomal subunit protein uL22 (110 aa).

It belongs to the universal ribosomal protein uL22 family. In terms of assembly, part of the 50S ribosomal subunit.

Its function is as follows. This protein binds specifically to 23S rRNA; its binding is stimulated by other ribosomal proteins, e.g. L4, L17, and L20. It is important during the early stages of 50S assembly. It makes multiple contacts with different domains of the 23S rRNA in the assembled 50S subunit and ribosome. The globular domain of the protein is located near the polypeptide exit tunnel on the outside of the subunit, while an extended beta-hairpin is found that lines the wall of the exit tunnel in the center of the 70S ribosome. This chain is Large ribosomal subunit protein uL22, found in Acinetobacter baumannii (strain ACICU).